Reading from the N-terminus, the 66-residue chain is U10-theraphotoxin-Cg1a 2 (66 aa).

Residues 1-21 (MKTSVLFVIFGLALLLCLSFA) form the signal peptide. Residues 22 to 29 (AELEDTGR) constitute a propeptide that is removed on maturation. Cystine bridges form between C31-C46, C38-C51, and C45-C58.

The protein belongs to the neurotoxin 10 (Hwtx-1) family. 29 (Jztx-13) subfamily. In terms of tissue distribution, expressed by the venom gland.

It localises to the secreted. Functionally, probable ion channel inhibitor. In Chilobrachys guangxiensis (Chinese earth tiger tarantula), this protein is U10-theraphotoxin-Cg1a 2.